A 345-amino-acid polypeptide reads, in one-letter code: Ferrochelatase (345 aa).

Fe cation contacts are provided by H215 and E296.

The protein belongs to the ferrochelatase family.

It localises to the cytoplasm. The catalysed reaction is heme b + 2 H(+) = protoporphyrin IX + Fe(2+). It participates in porphyrin-containing compound metabolism; protoheme biosynthesis; protoheme from protoporphyrin-IX: step 1/1. Catalyzes the ferrous insertion into protoporphyrin IX. In Rhodopseudomonas palustris (strain BisB5), this protein is Ferrochelatase.